Consider the following 305-residue polypeptide: Translation initiation factor eIF2B subunit alpha (305 aa).

At Lys35 the chain carries N6-acetyllysine.

The protein belongs to the eIF-2B alpha/beta/delta subunits family. In terms of assembly, component of the translation initiation factor 2B (eIF2B) complex which is a heterodecamer of two sets of five different subunits: alpha, beta, gamma, delta and epsilon. Subunits alpha, beta and delta comprise a regulatory subcomplex and subunits epsilon and gamma comprise a catalytic subcomplex. Within the complex, the hexameric regulatory complex resides at the center, with the two heterodimeric catalytic subcomplexes bound on opposite sides.

It is found in the cytoplasm. It localises to the cytosol. Activated by the chemical integrated stress response (ISR) inhibitor ISRIB which stimulates guanine nucleotide exchange factor activity for both phosphorylated and unphosphorylated eIF2. In terms of biological role, acts as a component of the translation initiation factor 2B (eIF2B) complex, which catalyzes the exchange of GDP for GTP on eukaryotic initiation factor 2 (eIF2) gamma subunit. Its guanine nucleotide exchange factor activity is repressed when bound to eIF2 complex phosphorylated on the alpha subunit, thereby limiting the amount of methionyl-initiator methionine tRNA available to the ribosome and consequently global translation is repressed. The chain is Translation initiation factor eIF2B subunit alpha (Eif2b1) from Rattus norvegicus (Rat).